An 84-amino-acid chain; its full sequence is Antitoxin VapB30 (84 aa).

Its function is as follows. Antitoxin component of a type II toxin-antitoxin (TA) system. Upon expression in M.smegmatis neutralizes the effect of cognate toxin VapC30. The protein is Antitoxin VapB30 (vapB30) of Mycobacterium tuberculosis (strain ATCC 25618 / H37Rv).